Reading from the N-terminus, the 601-residue chain is Oligoendopeptidase F, plasmid (601 aa).

His-387 serves as a coordination point for Zn(2+). Glu-388 is a catalytic residue. 2 residues coordinate Zn(2+): His-391 and His-394.

Belongs to the peptidase M3B family. It depends on Zn(2+) as a cofactor.

Hydrolyzes peptides containing between 7 and 17 amino acids with a rather wide specificity. The protein is Oligoendopeptidase F, plasmid (pepF1) of Lactococcus lactis subsp. cremoris (Streptococcus cremoris).